A 444-amino-acid polypeptide reads, in one-letter code: 23S rRNA (uracil(1939)-C(5))-methyltransferase RlmD (444 aa).

The TRAM domain maps to 11–70 (NSIKNHILKNIKVEKLDHRGRGLAYFQNKPLFIDGALAGELLEVQIVESKKRYSKGKIKK). [4Fe-4S] cluster is bound by residues C83, C89, C92, and C171. Residues Q277, F306, N311, E327, D354, and D376 each coordinate S-adenosyl-L-methionine. C402 acts as the Nucleophile in catalysis.

It belongs to the class I-like SAM-binding methyltransferase superfamily. RNA M5U methyltransferase family. RlmD subfamily.

The enzyme catalyses uridine(1939) in 23S rRNA + S-adenosyl-L-methionine = 5-methyluridine(1939) in 23S rRNA + S-adenosyl-L-homocysteine + H(+). Its function is as follows. Catalyzes the formation of 5-methyl-uridine at position 1939 (m5U1939) in 23S rRNA. This Psychromonas ingrahamii (strain DSM 17664 / CCUG 51855 / 37) protein is 23S rRNA (uracil(1939)-C(5))-methyltransferase RlmD.